Consider the following 202-residue polypeptide: Orotate phosphoribosyltransferase (202 aa).

5-phospho-alpha-D-ribose 1-diphosphate-binding positions include Lys93 and 113-121 (EDIITTGGS). Residues Thr117 and Arg145 each contribute to the orotate site.

This sequence belongs to the purine/pyrimidine phosphoribosyltransferase family. PyrE subfamily. In terms of assembly, homodimer. Mg(2+) is required as a cofactor.

It carries out the reaction orotidine 5'-phosphate + diphosphate = orotate + 5-phospho-alpha-D-ribose 1-diphosphate. The protein operates within pyrimidine metabolism; UMP biosynthesis via de novo pathway; UMP from orotate: step 1/2. Its function is as follows. Catalyzes the transfer of a ribosyl phosphate group from 5-phosphoribose 1-diphosphate to orotate, leading to the formation of orotidine monophosphate (OMP). The protein is Orotate phosphoribosyltransferase of Campylobacter jejuni subsp. doylei (strain ATCC BAA-1458 / RM4099 / 269.97).